We begin with the raw amino-acid sequence, 204 residues long: Recombination protein RecR (204 aa).

A C4-type zinc finger spans residues 58–75 (CSICQNVTDRGDDPCSIC). The region spanning 83–181 (SKICVVESPP…EVTKIARGIP (99 aa)) is the Toprim domain.

It belongs to the RecR family.

May play a role in DNA repair. It seems to be involved in an RecBC-independent recombinational process of DNA repair. It may act with RecF and RecO. The polypeptide is Recombination protein RecR (Chlorobium phaeobacteroides (strain BS1)).